A 425-amino-acid chain; its full sequence is Putative integrase/recombinase y4rF (425 aa).

A Core-binding (CB) domain is found at 123–210 (DPDALLLASF…HIRTFLRFLC (88 aa)). The 186-residue stretch at 233–418 (HLPPRLAWGD…AASQLAEVAL (186 aa)) folds into the Tyr recombinase domain. Catalysis depends on residues Arg-273, Lys-298, His-370, Arg-373, and His-396. The active-site O-(3'-phospho-DNA)-tyrosine intermediate is Tyr-405.

This sequence belongs to the 'phage' integrase family.

This is Putative integrase/recombinase y4rF from Sinorhizobium fredii (strain NBRC 101917 / NGR234).